The chain runs to 485 residues: Argininosuccinate lyase (485 aa).

It belongs to the lyase 1 family. Argininosuccinate lyase subfamily.

The protein resides in the cytoplasm. It catalyses the reaction 2-(N(omega)-L-arginino)succinate = fumarate + L-arginine. The protein operates within amino-acid biosynthesis; L-arginine biosynthesis; L-arginine from L-ornithine and carbamoyl phosphate: step 3/3. In Nitrosopumilus maritimus (strain SCM1), this protein is Argininosuccinate lyase.